Reading from the N-terminus, the 603-residue chain is MLLPCALLAALLAAGHAANPCCSLPCQNRGVCMTTGFDRYECDCTRTGYYGENCTTPEFFTWLKLILKPTPNTVHYILTHFKGVWNIINNISFLRDTIMRYVLTSRSHLIDSPPTYNSDYSYKSWEAYSNLSYYTRSLPPVGHDCPTPMGVKGKKELPDSKLIVEKFLLRRKFIPDPQGTNVMFTFFAQHFTHQFFKTDHKKGPGFTKAYGHGVDLNHIYGETLERQLKLRLRKDGKLKYQMIDGEMYPPTVKDTQAEMIYPPHVPEHLQFSVGQEVFGLVPGLMMYATIWLREHNRVCDVLKQEHPEWDDEQLFQTTRLILIGETIKIVIEDYVQHLSGYHFKLKFDPELLFNQRFQYQNRIAAEFNTLYHWHPLLPDTFQIHNQEYTFQQFLYNNSIMLEHGLSHMVKSFSKQSAGRVAGGKNVPAAVQKVAKASIDQSRQMRYQSLNEYRKRFMLKPFKSFEELTGEKEMAAELEELYGDIDAMELYPGLLVEKPRPGAIFGETMVEIGAPFSLKGLMGNTICSPEYWKPSTFGGKVGFEIINTASLQKLICNNVKGCPFTAFHVLNPEPTEATINVSTSNTAMEDINPTLLLKEQSAEL.

The signal sequence occupies residues 1 to 17 (MLLPCALLAALLAAGHA). The region spanning 18 to 55 (ANPCCSLPCQNRGVCMTTGFDRYECDCTRTGYYGENCT) is the EGF-like domain. 4 cysteine pairs are disulfide-bonded: cysteine 21–cysteine 32, cysteine 22–cysteine 145, cysteine 26–cysteine 42, and cysteine 44–cysteine 54. N-linked (GlcNAc...) asparagine glycans are attached at residues asparagine 53 and asparagine 90. Arginine 106 is a substrate binding site. A glycan (N-linked (GlcNAc...) asparagine) is linked at asparagine 130. The active-site Proton acceptor is the histidine 193. Position 341 (tyrosine 341) interacts with substrate. Tyrosine 371 (for cyclooxygenase activity) is an active-site residue. Histidine 374 serves as a coordination point for heme b. The cysteines at positions 555 and 561 are disulfide-linked.

Belongs to the prostaglandin G/H synthase family. As to quaternary structure, homodimer. Heme b serves as cofactor.

It localises to the microsome membrane. The protein localises to the endoplasmic reticulum membrane. It catalyses the reaction (5Z,8Z,11Z,14Z)-eicosatetraenoate + AH2 + 2 O2 = prostaglandin H2 + A + H2O. The catalysed reaction is (9Z,12Z)-octadecadienoate + AH2 + O2 = (9R)-hydroxy-(10E,12Z)-octadecadienoate + A + H2O. The enzyme catalyses (9Z,12Z)-octadecadienoate + AH2 + O2 = (9S)-hydroxy-(10E,12Z)-octadecadienoate + A + H2O. It carries out the reaction (9Z,12Z)-octadecadienoate + AH2 + O2 = (13S)-hydroxy-(9Z,11E)-octadecadienoate + A + H2O. It catalyses the reaction (9Z,12Z)-octadecadienoate + AH2 + O2 = (13R)-hydroxy-(9Z,11E)-octadecadienoate + A + H2O. The protein operates within lipid metabolism; prostaglandin biosynthesis. Its function is as follows. Dual cyclooxygenase and peroxidase in the biosynthesis pathway of prostanoids, a class of C20 oxylipins mainly derived from arachidonate ((5Z,8Z,11Z,14Z)-eicosatetraenoate, AA, C20:4(n-6)), with a particular role in the inflammatory response. The cyclooxygenase activity oxygenates AA to the hydroperoxy endoperoxide prostaglandin G2 (PGG2), and the peroxidase activity reduces PGG2 to the hydroxy endoperoxide prostaglandin H2 (PGH2), the precursor of all 2-series prostaglandins and thromboxanes. This complex transformation is initiated by abstraction of hydrogen at carbon 13 (with S-stereochemistry), followed by insertion of molecular O2 to form the endoperoxide bridge between carbon 9 and 11 that defines prostaglandins. The insertion of a second molecule of O2 (bis-oxygenase activity) yields a hydroperoxy group in PGG2 that is then reduced to PGH2 by two electrons. Similarly catalyzes successive cyclooxygenation and peroxidation of dihomo-gamma-linoleate (DGLA, C20:3(n-6)) and eicosapentaenoate (EPA, C20:5(n-3)) to corresponding PGH1 and PGH3, the precursors of 1- and 3-series prostaglandins. In an alternative pathway of prostanoid biosynthesis, converts 2-arachidonoyl lysophopholipids to prostanoid lysophopholipids, which are then hydrolyzed by intracellular phospholipases to release free prostanoids. Metabolizes 2-arachidonoyl glycerol yielding the glyceryl ester of PGH2, a process that can contribute to pain response. Generates lipid mediators from n-3 and n-6 polyunsaturated fatty acids (PUFAs) via a lipoxygenase-type mechanism. Oxygenates PUFAs to hydroperoxy compounds and then reduces them to corresponding alcohols. Plays a role in the generation of resolution phase interaction products (resolvins) during both sterile and infectious inflammation. Metabolizes docosahexaenoate (DHA, C22:6(n-3)) to 17R-HDHA, a precursor of the D-series resolvins (RvDs). As a component of the biosynthetic pathway of E-series resolvins (RvEs), converts eicosapentaenoate (EPA, C20:5(n-3)) primarily to 18S-HEPE that is further metabolized by ALOX5 and LTA4H to generate 18S-RvE1 and 18S-RvE2. In vascular endothelial cells, converts docosapentaenoate (DPA, C22:5(n-3)) to 13R-HDPA, a precursor for 13-series resolvins (RvTs) shown to activate macrophage phagocytosis during bacterial infection. In activated leukocytes, contributes to oxygenation of hydroxyeicosatetraenoates (HETE) to diHETES (5,15-diHETE and 5,11-diHETE). Can also use linoleate (LA, (9Z,12Z)-octadecadienoate, C18:2(n-6)) as substrate and produce hydroxyoctadecadienoates (HODEs) in a regio- and stereospecific manner, being (9R)-HODE ((9R)-hydroxy-(10E,12Z)-octadecadienoate) and (13S)-HODE ((13S)-hydroxy-(9Z,11E)-octadecadienoate) its major products. During neuroinflammation, plays a role in neuronal secretion of specialized preresolving mediators (SPMs) 15R-lipoxin A4 that regulates phagocytic microglia. This Gallus gallus (Chicken) protein is Prostaglandin G/H synthase 2 (PTGS2).